Reading from the N-terminus, the 466-residue chain is Uronate isomerase (466 aa).

Belongs to the metallo-dependent hydrolases superfamily. Uronate isomerase family.

The enzyme catalyses D-glucuronate = D-fructuronate. It carries out the reaction aldehydo-D-galacturonate = keto-D-tagaturonate. The protein operates within carbohydrate metabolism; pentose and glucuronate interconversion. The polypeptide is Uronate isomerase (Streptococcus pneumoniae (strain 70585)).